The sequence spans 209 residues: Uracil phosphoribosyltransferase (209 aa).

5-phospho-alpha-D-ribose 1-diphosphate is bound by residues R79, R104, and 131-139 (DPMLATGNS). Residues I194 and 199–201 (GDA) each bind uracil. D200 contributes to the 5-phospho-alpha-D-ribose 1-diphosphate binding site.

The protein belongs to the UPRTase family. Mg(2+) is required as a cofactor.

It carries out the reaction UMP + diphosphate = 5-phospho-alpha-D-ribose 1-diphosphate + uracil. It participates in pyrimidine metabolism; UMP biosynthesis via salvage pathway; UMP from uracil: step 1/1. Allosterically activated by GTP. Catalyzes the conversion of uracil and 5-phospho-alpha-D-ribose 1-diphosphate (PRPP) to UMP and diphosphate. The sequence is that of Uracil phosphoribosyltransferase from Rhodococcus jostii (strain RHA1).